The primary structure comprises 357 residues: MLLVAFVTLLVAVALQPLPSVLSLDVHLLRQLAAKHNVTSILVFGDSSVDPGNNNFIKTEMKGNFPPYGENFINHKPTGRLCDGLLAPDYIAEAMGYPPIPAFLDPSLTQADLTRGASFASAGSGYDDLTANISNVWSFTTQANYFLHYKIHLTKLVGPLESAKMINNAIFLMSMGSNDFLQNYLVDFTRQKQFTVEQYIEFLSHRMLYDAKMLHRLGAKRLVVVGVPPMGCMPLIKYLRGQKTCVDQLNQIAFSFNAKIIKNLELLQSKIGLKTIYVDAYSTIQEAIKNPRKFGFVEASLGCCGTGTYEYGETCKDMQVCKDPTKYVFWDAVHPTQRMYQIIVKKAIASISEEFLV.

The first 23 residues, 1-23 (MLLVAFVTLLVAVALQPLPSVLS), serve as a signal peptide directing secretion. N-linked (GlcNAc...) asparagine glycosylation occurs at asparagine 37. Serine 47 functions as the Nucleophile in the catalytic mechanism. N-linked (GlcNAc...) asparagine glycosylation is present at asparagine 132. Catalysis depends on residues aspartate 331 and histidine 334.

It belongs to the 'GDSL' lipolytic enzyme family.

It localises to the secreted. The polypeptide is GDSL esterase/lipase At5g45950 (Arabidopsis thaliana (Mouse-ear cress)).